We begin with the raw amino-acid sequence, 249 residues long: Undecaprenyl-diphosphatase (249 aa).

The next 8 membrane-spanning stretches (helical) occupy residues 11–31, 35–55, 80–100, 101–121, 135–155, 180–200, 202–222, and 226–246; these read GLTEFLPISSSGHLAIFTAIF, PDVGYFAFLHLATFLAVLIFV, LVLSTIPAVFVGLFFGDFIES, VFSSTYLIGIFLSITGILMLL, IPYFDALIVGVFQAFSVLPGI, FLMSLPVTFGAGILELHNVAF, TEQIFGFVISFLTGLLGLYLV, and VIGGKLKIFGYYCFLASFFVL.

Belongs to the UppP family.

It localises to the cell membrane. It carries out the reaction di-trans,octa-cis-undecaprenyl diphosphate + H2O = di-trans,octa-cis-undecaprenyl phosphate + phosphate + H(+). Functionally, catalyzes the dephosphorylation of undecaprenyl diphosphate (UPP). This chain is Undecaprenyl-diphosphatase, found in Methanococcus maripaludis (strain C7 / ATCC BAA-1331).